Reading from the N-terminus, the 510-residue chain is ATP synthase subunit alpha (510 aa).

Position 169–176 (169–176 (GDRQTGKT)) interacts with ATP.

This sequence belongs to the ATPase alpha/beta chains family. F-type ATPases have 2 components, CF(1) - the catalytic core - and CF(0) - the membrane proton channel. CF(1) has five subunits: alpha(3), beta(3), gamma(1), delta(1), epsilon(1). CF(0) has three main subunits: a(1), b(2) and c(9-12). The alpha and beta chains form an alternating ring which encloses part of the gamma chain. CF(1) is attached to CF(0) by a central stalk formed by the gamma and epsilon chains, while a peripheral stalk is formed by the delta and b chains.

The protein localises to the cell inner membrane. It catalyses the reaction ATP + H2O + 4 H(+)(in) = ADP + phosphate + 5 H(+)(out). Functionally, produces ATP from ADP in the presence of a proton gradient across the membrane. The alpha chain is a regulatory subunit. In Rickettsia felis (strain ATCC VR-1525 / URRWXCal2) (Rickettsia azadi), this protein is ATP synthase subunit alpha.